The chain runs to 235 residues: 2,3,4,5-tetrahydropyridine-2,6-dicarboxylate N-acetyltransferase (235 aa).

It belongs to the transferase hexapeptide repeat family. DapH subfamily.

It carries out the reaction (S)-2,3,4,5-tetrahydrodipicolinate + acetyl-CoA + H2O = L-2-acetamido-6-oxoheptanedioate + CoA. The protein operates within amino-acid biosynthesis; L-lysine biosynthesis via DAP pathway; LL-2,6-diaminopimelate from (S)-tetrahydrodipicolinate (acetylase route): step 1/3. In terms of biological role, catalyzes the transfer of an acetyl group from acetyl-CoA to tetrahydrodipicolinate. In Exiguobacterium sibiricum (strain DSM 17290 / CCUG 55495 / CIP 109462 / JCM 13490 / 255-15), this protein is 2,3,4,5-tetrahydropyridine-2,6-dicarboxylate N-acetyltransferase.